We begin with the raw amino-acid sequence, 178 residues long: ATP-dependent protease subunit HslV (178 aa).

The active site involves Thr2. Na(+)-binding residues include Ser159, Cys162, and Thr165.

The protein belongs to the peptidase T1B family. HslV subfamily. As to quaternary structure, a double ring-shaped homohexamer of HslV is capped on each side by a ring-shaped HslU homohexamer. The assembly of the HslU/HslV complex is dependent on binding of ATP.

The protein localises to the cytoplasm. It catalyses the reaction ATP-dependent cleavage of peptide bonds with broad specificity.. With respect to regulation, allosterically activated by HslU binding. Functionally, protease subunit of a proteasome-like degradation complex believed to be a general protein degrading machinery. The protein is ATP-dependent protease subunit HslV of Buchnera aphidicola subsp. Cinara cedri (strain Cc).